The sequence spans 60 residues: Ribosome biogenesis protein Nop10 (60 aa).

The tract at residues 29 to 60 is disordered; sequence CDGPTENSAPAPFSPEDPYGEYRRRVRRRASE.

This sequence belongs to the NOP10 family.

Its function is as follows. Involved in ribosome biogenesis; more specifically in 18S rRNA pseudouridylation and in cleavage of pre-rRNA. The protein is Ribosome biogenesis protein Nop10 of Halorubrum lacusprofundi (strain ATCC 49239 / DSM 5036 / JCM 8891 / ACAM 34).